The primary structure comprises 1499 residues: Rap guanine nucleotide exchange factor 2 (1499 aa).

2 disordered regions span residues 40–59 and 68–101; these read HVSS…SSSL and SEAG…SDPL. The segment covering 83 to 94 has biased composition (acidic residues); it reads VDSEDDDDEEDI. 135–254 lines the a nucleoside 3',5'-cyclic phosphate pocket; the sequence is AFANMTMSVR…VEEEGEIVMV (120 aa). Residues 267–380 form the N-terminal Ras-GEF domain; the sequence is KGHIVIKGTS…RLLNIACAAK (114 aa). Residues 385-470 enclose the PDZ domain; it reads LMTLTKPSRE…ITVKTNLFVF (86 aa). A Phosphoserine modification is found at S501. Residues 606–692 form the Ras-associating domain; sequence PDQVLRVFKA…GRYYLKNNME (87 aa). T644 carries the post-translational modification Phosphothreonine; by PLK2. Positions 717–944 constitute a Ras-GEF domain; it reads STVEVATQLS…SQGSTNATVL (228 aa). The residue at position 806 (S806) is a Phosphoserine; by PLK2. Phosphoserine is present on S930. Position 933 is a phosphoserine; by PLK2 (S933). A disordered region spans residues 1002-1050; sequence PATNTLPKNPGDKKPVKSETSPVAPRAGSQQKAQSLPQPQQQPPPAHKI. S1022 is modified (phosphoserine). A compositionally biased stretch (low complexity) spans 1031–1040; sequence QQKAQSLPQP. A phosphoserine mark is found at S1080, S1089, S1095, S1116, S1120, and S1159. The interval 1095–1160 is disordered; that stretch reads SLERHKKQAE…RSSIVSNSSF (66 aa). 2 stretches are compositionally biased toward low complexity: residues 1111 to 1125 and 1141 to 1160; these read SSQL…QSSP and SDSG…NSSF. At S1176 the chain carries Phosphoserine; by PLK2. Disordered stretches follow at residues 1224–1256 and 1305–1499; these read PSTE…SSGS and TKYN…VSAV. 2 stretches are compositionally biased toward polar residues: residues 1247–1256 and 1307–1331; these read GSWTSCSSGS and YNRQ…SSTG. Residues 1355–1366 are compositionally biased toward low complexity; the sequence is EAESSSLTSVTT. Over residues 1441-1462 the composition is skewed to polar residues; sequence SSDTAGPSSVQQPHGHPTSSRP. A compositionally biased stretch (acidic residues) spans 1488–1499; sequence TEEDEDEQVSAV.

Belongs to the RAPGEF2 family. Interacts with CDH1, CTNNB1 and TJP1. Interacts (via C-terminal domain) with MAGI2 (via PDZ and WW domains); the interaction occurs before or after NGF stimulation. Interacts with KIDINS220 and NTRK1; the interactions occur after NGF stimulation. Found in a complex, at least composed of KIDINS220, MAGI2, NTRK1 and RAPGEF2; the complex is mainly formed at late endosomes in a neuronal growth factor (NGF)-dependent manner. Interacts (via C-terminal domain) with NEDD4 (via WW domains); this interaction leads to ubiquitination and degradation via the proteasome pathway in a cAMP-independent manner. Interacts with MAGI1 isoform 3 (via PDZ domain). Interacts with ADRB1 (via C-terminal PDZ motif); the interaction is direct. Interacts (via Ras-associating domain) with RAP1A (via GTP-bound active form). Interacts weakly with HRAS (via GDP- and GTP-bound forms). Interacts (via C-terminal domain) with MAGI2 (via PDZ and WW domains). Post-translationally, ubiquitinated by NEDD4, leading to proteasomal degradation. In terms of processing, phosphorylation by PLK2 promotes its activity. As to expression, expressed in primary neuronal and endocrine cells (at protein level). Highest expression levels in brain. Lower expression levels in heart, kidney, lung, placenta and blood leukocytes.

It is found in the cytoplasm. Its subcellular location is the perinuclear region. The protein localises to the cell membrane. The protein resides in the late endosome. It localises to the cell junction. In terms of biological role, functions as a guanine nucleotide exchange factor (GEF), which activates Rap and Ras family of small GTPases by exchanging bound GDP for free GTP in a cAMP-dependent manner. Serves as a link between cell surface receptors and Rap/Ras GTPases in intracellular signaling cascades. Also acts as an effector for Rap1 by direct association with Rap1-GTP thereby leading to the amplification of Rap1-mediated signaling. Shows weak activity on HRAS. It is controversial whether RAPGEF2 binds cAMP and cGMP or not. Its binding to ligand-activated beta-1 adrenergic receptor ADRB1 leads to the Ras activation through the G(s)-alpha signaling pathway. Involved in the cAMP-induced Ras and Erk1/2 signaling pathway that leads to sustained inhibition of long term melanogenesis by reducing dendrite extension and melanin synthesis. Also provides inhibitory signals for cell proliferation of melanoma cells and promotes their apoptosis in a cAMP-independent nanner. Regulates cAMP-induced neuritogenesis by mediating the Rap1/B-Raf/ERK signaling through a pathway that is independent on both PKA and RAPGEF3/RAPGEF4. Involved in neuron migration and in the formation of the major forebrain fiber connections forming the corpus callosum, the anterior commissure and the hippocampal commissure during brain development. Involved in neuronal growth factor (NGF)-induced sustained activation of Rap1 at late endosomes and in brain-derived neurotrophic factor (BDNF)-induced axon outgrowth of hippocampal neurons. Plays a role in the regulation of embryonic blood vessel formation and in the establishment of basal junction integrity and endothelial barrier function. May be involved in the regulation of the vascular endothelial growth factor receptor KDR and cadherin CDH5 expression at allantois endothelial cell-cell junctions. The polypeptide is Rap guanine nucleotide exchange factor 2 (RAPGEF2) (Homo sapiens (Human)).